A 466-amino-acid chain; its full sequence is Phytase A (466 aa).

A signal peptide spans 1–19 (MGVFVVLLSIATLFGSTSG). Asn-27 is a glycosylation site (N-linked (GlcNAc...) asparagine). Cys-31 and Cys-40 are joined by a disulfide. 1D-myo-inositol hexakisphosphate-binding residues include Tyr-51, Arg-81, His-82, Arg-85, and Thr-88. Intrachain disulfides connect Cys-71/Cys-414, Cys-215/Cys-465, Cys-264/Cys-282, and Cys-436/Cys-444. His-82 functions as the Nucleophile in the catalytic mechanism. Asn-105 and Asn-120 each carry an N-linked (GlcNAc...) asparagine glycan. Arg-165 serves as a coordination point for 1D-myo-inositol hexakisphosphate. N-linked (GlcNAc...) asparagine glycosylation is found at Asn-207 and Asn-230. Lys-301 is a binding site for 1D-myo-inositol hexakisphosphate. Asn-339 and Asn-352 each carry an N-linked (GlcNAc...) asparagine glycan. Residues His-361 and Asp-362 each contribute to the 1D-myo-inositol hexakisphosphate site. Residue Asn-376 is glycosylated (N-linked (GlcNAc...) asparagine).

This sequence belongs to the histidine acid phosphatase family. In terms of assembly, monomer.

It is found in the secreted. It catalyses the reaction 1D-myo-inositol hexakisphosphate + H2O = 1D-myo-inositol 1,2,4,5,6-pentakisphosphate + phosphate. It carries out the reaction 1D-myo-inositol 1,2,4,5,6-pentakisphosphate + H2O = 1D-myo-inositol 1,2,5,6-tetrakisphosphate + phosphate. The catalysed reaction is 1D-myo-inositol 1,2,5,6-tetrakisphosphate + H2O = 1D-myo-inositol 1,2,6-trisphosphate + phosphate. The enzyme catalyses 1D-myo-inositol 1,2,6-trisphosphate + H2O = 1D-myo-inositol 1,2-bisphosphate + phosphate. It catalyses the reaction 1D-myo-inositol 1,2-bisphosphate + H2O = 1D-myo-inositol 2-phosphate + phosphate. In terms of biological role, catalyzes the phosphate monoester hydrolysis of phytic acid (myo-inositol hexakisphosphate), which results in the stepwise formation of myo-inositol pentakis-, tetrakis-, tris-, bis-, and monophosphates, as well as the liberation of inorganic phosphate. Myo-inositol 2-monophosphate is the end product. Has a broad substrate specificity and is also able to dephosphorylate other classic acid phosphatase substrates such as p-nitrophenyl phosphate, phenyl phosphate, fructose 1,6-bisphosphate, glucose 6-phosphate, 3-phosphoglycerate, as well as ADP and ATP. This Aspergillus terreus protein is Phytase A.